The following is a 437-amino-acid chain: UDP-N-acetylmuramate--L-alanine ligase (437 aa).

An ATP-binding site is contributed by 114–120; the sequence is GTHGKTS.

It belongs to the MurCDEF family.

It localises to the cytoplasm. The enzyme catalyses UDP-N-acetyl-alpha-D-muramate + L-alanine + ATP = UDP-N-acetyl-alpha-D-muramoyl-L-alanine + ADP + phosphate + H(+). The protein operates within cell wall biogenesis; peptidoglycan biosynthesis. Functionally, cell wall formation. This is UDP-N-acetylmuramate--L-alanine ligase from Lactobacillus helveticus (strain DPC 4571).